A 662-amino-acid chain; its full sequence is UvrABC system protein B (662 aa).

Residues 25 to 411 form the Helicase ATP-binding domain; sequence DGIIAGDKFQ…STRIVEQVIR (387 aa). Residue 38–45 coordinates ATP; that stretch reads GVTGSGKT. Positions 91-114 match the Beta-hairpin motif; the sequence is YYDYYQPEAYVPARDLYIEKDASI. Positions 428-594 constitute a Helicase C-terminal domain; that stretch reads QMEHIYGEVK…TIKKAIEDIL (167 aa). The region spanning 625-660 is the UVR domain; the sequence is KKLIKKLEAQMAEYADMLMFEEAAVIRDKIEEVKRI.

Belongs to the UvrB family. As to quaternary structure, forms a heterotetramer with UvrA during the search for lesions. Interacts with UvrC in an incision complex.

The protein resides in the cytoplasm. The UvrABC repair system catalyzes the recognition and processing of DNA lesions. A damage recognition complex composed of 2 UvrA and 2 UvrB subunits scans DNA for abnormalities. Upon binding of the UvrA(2)B(2) complex to a putative damaged site, the DNA wraps around one UvrB monomer. DNA wrap is dependent on ATP binding by UvrB and probably causes local melting of the DNA helix, facilitating insertion of UvrB beta-hairpin between the DNA strands. Then UvrB probes one DNA strand for the presence of a lesion. If a lesion is found the UvrA subunits dissociate and the UvrB-DNA preincision complex is formed. This complex is subsequently bound by UvrC and the second UvrB is released. If no lesion is found, the DNA wraps around the other UvrB subunit that will check the other stand for damage. In Treponema denticola (strain ATCC 35405 / DSM 14222 / CIP 103919 / JCM 8153 / KCTC 15104), this protein is UvrABC system protein B.